A 709-amino-acid chain; its full sequence is G1/S-specific cyclin-E (709 aa).

5 disordered regions span residues 1–30 (MGLN…NGEV), 43–149 (ISSS…NLSS), 162–205 (VDGQ…GSKQ), 221–289 (TVVT…PKHQ), and 642–709 (ALRA…RSNP). Composition is skewed to polar residues over residues 7 to 29 (SVCS…SNGE), 61 to 70 (PSTSFSSASQ), and 91 to 106 (CDSQ…TSNG). Phosphoserine is present on residues Ser-114, Ser-115, Ser-117, and Ser-129. Positions 162-175 (VDGQSTQELLSIRS) are enriched in polar residues. Phosphoserine is present on residues Ser-187, Ser-192, Ser-195, and Ser-198. A compositionally biased stretch (pro residues) spans 187–199 (SPLPDSPDSPPSP). Acidic residues predominate over residues 228–258 (EDDDLLDDSCEDYSYDEDDEDDVEEEDDDVE). A compositionally biased stretch (polar residues) spans 260–277 (YSSTISPASSGCSQQQAV). A Phosphothreonine modification is found at Thr-651. A compositionally biased stretch (low complexity) spans 677–709 (SSTTTCCNTAASNKGGKSSSNNSVTSCSSRSNP).

Belongs to the cyclin family. Cyclin E subfamily. As to quaternary structure, interacts with a member of the CDK2/CDK protein kinases to form a serine/threonine kinase holoenzyme complex. The cyclin subunit imparts substrate specificity to the complex. Interacts (via C-terminus) with Z600 (via C-terminus). Isoform II is ubiquitous in early embryos and, prior to mitosis 14, is rapidly degraded in all cells except the pole (germ) cells. Expressed during G1 phase in proliferating peripheral nervous system cells. Constitutive expression in embryonic cycles lacking a G1 phase.

It is found in the nucleus. Functionally, essential for the control of the cell cycle at the G1/S (start) transition. Targeted by archipelago for degradation by the SFC ubiquitin ligase complex. The polypeptide is G1/S-specific cyclin-E (CycE) (Drosophila melanogaster (Fruit fly)).